We begin with the raw amino-acid sequence, 528 residues long: uncharacterized protein (528 aa).

This is an uncharacterized protein from Giardia intestinalis (Giardia lamblia).